Here is a 273-residue protein sequence, read N- to C-terminus: Large ribosomal subunit protein uL2 (273 aa).

Disordered regions lie at residues 32–53 (PLVE…TTRH) and 221–273 (RGTA…RRSK). Residues 39-48 (KSGGRNNNGR) show a composition bias toward low complexity.

It belongs to the universal ribosomal protein uL2 family. As to quaternary structure, part of the 50S ribosomal subunit. Forms a bridge to the 30S subunit in the 70S ribosome.

In terms of biological role, one of the primary rRNA binding proteins. Required for association of the 30S and 50S subunits to form the 70S ribosome, for tRNA binding and peptide bond formation. It has been suggested to have peptidyltransferase activity; this is somewhat controversial. Makes several contacts with the 16S rRNA in the 70S ribosome. The polypeptide is Large ribosomal subunit protein uL2 (Erwinia tasmaniensis (strain DSM 17950 / CFBP 7177 / CIP 109463 / NCPPB 4357 / Et1/99)).